The primary structure comprises 379 residues: Queuine tRNA-ribosyltransferase (379 aa).

Asp-94 functions as the Proton acceptor in the catalytic mechanism. Residues 94–98 (DSGGF), Asp-148, Gln-191, and Gly-218 each bind substrate. The tract at residues 249-255 (GVGSPDA) is RNA binding. Asp-268 acts as the Nucleophile in catalysis. An RNA binding; important for wobble base 34 recognition region spans residues 273–277 (TRIAR). The Zn(2+) site is built by Cys-306, Cys-308, Cys-311, and His-337.

This sequence belongs to the queuine tRNA-ribosyltransferase family. Homodimer. Within each dimer, one monomer is responsible for RNA recognition and catalysis, while the other monomer binds to the replacement base PreQ1. Zn(2+) serves as cofactor.

The enzyme catalyses 7-aminomethyl-7-carbaguanine + guanosine(34) in tRNA = 7-aminomethyl-7-carbaguanosine(34) in tRNA + guanine. It functions in the pathway tRNA modification; tRNA-queuosine biosynthesis. Catalyzes the base-exchange of a guanine (G) residue with the queuine precursor 7-aminomethyl-7-deazaguanine (PreQ1) at position 34 (anticodon wobble position) in tRNAs with GU(N) anticodons (tRNA-Asp, -Asn, -His and -Tyr). Catalysis occurs through a double-displacement mechanism. The nucleophile active site attacks the C1' of nucleotide 34 to detach the guanine base from the RNA, forming a covalent enzyme-RNA intermediate. The proton acceptor active site deprotonates the incoming PreQ1, allowing a nucleophilic attack on the C1' of the ribose to form the product. After dissociation, two additional enzymatic reactions on the tRNA convert PreQ1 to queuine (Q), resulting in the hypermodified nucleoside queuosine (7-(((4,5-cis-dihydroxy-2-cyclopenten-1-yl)amino)methyl)-7-deazaguanosine). This Macrococcus caseolyticus (strain JCSC5402) (Macrococcoides caseolyticum) protein is Queuine tRNA-ribosyltransferase.